Reading from the N-terminus, the 117-residue chain is Large ribosomal subunit protein bL19 (117 aa).

This sequence belongs to the bacterial ribosomal protein bL19 family.

This protein is located at the 30S-50S ribosomal subunit interface and may play a role in the structure and function of the aminoacyl-tRNA binding site. In Vibrio vulnificus (strain CMCP6), this protein is Large ribosomal subunit protein bL19.